The sequence spans 352 residues: Protein RecA (352 aa).

64–71 (GPESSGKT) provides a ligand contact to ATP. The interval 328–352 (NPSSVPEAEAEHDPEQDEEPTFDLE) is disordered. Over residues 335–352 (AEAEHDPEQDEEPTFDLE) the composition is skewed to acidic residues.

The protein belongs to the RecA family.

Its subcellular location is the cytoplasm. Can catalyze the hydrolysis of ATP in the presence of single-stranded DNA, the ATP-dependent uptake of single-stranded DNA by duplex DNA, and the ATP-dependent hybridization of homologous single-stranded DNAs. It interacts with LexA causing its activation and leading to its autocatalytic cleavage. This is Protein RecA from Brevibacillus brevis (strain 47 / JCM 6285 / NBRC 100599).